We begin with the raw amino-acid sequence, 515 residues long: Pre-glycoprotein polyprotein GP complex (515 aa).

The N-myristoyl glycine; by host moiety is linked to residue G2. Residues 2 to 17 (GQVIGFFQSLPEIINE) are Extracellular-facing. A helical transmembrane segment spans residues 18–33 (ALNIALICVALLATIK). Residues 34–58 (GMVNIWKSGLIQLLFFLTLAGRSCS) lie on the Cytoplasmic side of the membrane. C57 contributes to the Zn(2+) binding site. Residues 59–453 (HSFTIGRFHE…QGRTPLSLVD (395 aa)) lie on the Extracellular side of the membrane. Intrachain disulfides connect C87–C255, C300–C313, C322–C331, and C385–C406. N90, N112, N127, N180, and N248 each carry an N-linked (GlcNAc...) asparagine; by host glycan. N-linked (GlcNAc...) asparagine; by host glycosylation is found at N386, N394, and N416. Residues 454–474 (LCFWSTLFYISTLFAHLVGFP) traverse the membrane as a helical segment. Topologically, residues 475 to 515 (THRHLIGEGCPKPHRLTGSGICSCGHYGIPGKPVRWTKMSR) are cytoplasmic. Residues H476, H478, C484, H488, C496, and C498 each coordinate Zn(2+).

It belongs to the arenaviridae GPC protein family. In terms of assembly, interacts with glycoprotein G2. Part of the GP complex (GP-C) together with glycoprotein G1 and glycoprotein G2. The GP-complex interacts with protein Z, which interacts with ribonucleocapsid; these interactions may induce virion budding. Homotrimer; disulfide-linked. In pre-fusion state, G1 homotrimers bind G2 homotrimers via ionic interactions. Part of the GP complex (GP-C) together with glycoprotein G2 and the stable signal peptide. The GP-complex interacts with protein Z, which interacts with ribonucleocapsid; these interactions may induce virion budding. As to quaternary structure, homotrimer. Interacts with the stable signal peptide. In pre-fusion state, G2 homotrimers bind G1 homotrimers via ionic interactions. Part of the GP complex (GP-C) together with glycoprotein G1 and the stable signal peptide. Acidification in the endosome triggers rearrangements, which ultimately leads to a 6 helix bundle formed by the two heptad repeat domains (HR1 and HR2) in post-fusion state. The GP-complex interacts with protein Z, which interacts with ribonucleocapsid; these interactions may induce virion budding. Post-translationally, specific enzymatic cleavages in vivo yield mature proteins. GP-C polyprotein is cleaved in the endoplasmic reticulum by the host protease MBTPS1. Only cleaved glycoprotein is incorporated into virions. In terms of processing, the SSP remains stably associated with the GP complex following cleavage by signal peptidase and plays crucial roles in the trafficking of GP through the secretory pathway. Myristoylation is necessary for GP2-mediated fusion activity.

It localises to the virion membrane. The protein resides in the host endoplasmic reticulum membrane. It is found in the host Golgi apparatus membrane. Its subcellular location is the host cell membrane. Functions as a cleaved signal peptide that is retained as the third component of the GP complex (GP-C). Helps to stabilize the spike complex in its native conformation. The SSP is required for efficient glycoprotein expression, post-translational maturation cleavage of G1 and G2, glycoprotein transport to the cell surface plasma membrane, formation of infectious virus particles, and acid pH-dependent glycoprotein-mediated cell fusion. Functionally, forms the virion spikes together with glycoprotein G2. The glycoprotein spike trimers are connected to the underlying matrix. Mediates virus attachment to host receptor alpha-dystroglycan DAG1. This attachment induces virion internalization predominantly through clathrin- and caveolin-independent endocytosis. In terms of biological role, forms the virion spikes together with glycoprotein G1. The glycoprotein spike trimers are connected to the underlying matrix. Class I viral fusion protein that directs fusion of viral and host endosomal membranes, leading to delivery of the nucleocapsid into the cytoplasm. Membrane fusion is mediated by irreversible conformational changes induced by acidification. This is Pre-glycoprotein polyprotein GP complex from Latino mammarenavirus (isolate Rat/Bolivia/MARU 1924/1965) (LATV).